The chain runs to 230 residues: Phosphoribosylformylglycinamidine synthase subunit PurQ (230 aa).

A Glutamine amidotransferase type-1 domain is found at 2-230 (KIAVTKFLGT…KGMIDYAKRI (229 aa)). Cys85 functions as the Nucleophile in the catalytic mechanism. Active-site residues include His202 and Glu204.

As to quaternary structure, part of the FGAM synthase complex composed of 1 PurL, 1 PurQ and 2 PurS subunits.

The protein localises to the cytoplasm. The enzyme catalyses N(2)-formyl-N(1)-(5-phospho-beta-D-ribosyl)glycinamide + L-glutamine + ATP + H2O = 2-formamido-N(1)-(5-O-phospho-beta-D-ribosyl)acetamidine + L-glutamate + ADP + phosphate + H(+). It carries out the reaction L-glutamine + H2O = L-glutamate + NH4(+). It participates in purine metabolism; IMP biosynthesis via de novo pathway; 5-amino-1-(5-phospho-D-ribosyl)imidazole from N(2)-formyl-N(1)-(5-phospho-D-ribosyl)glycinamide: step 1/2. In terms of biological role, part of the phosphoribosylformylglycinamidine synthase complex involved in the purines biosynthetic pathway. Catalyzes the ATP-dependent conversion of formylglycinamide ribonucleotide (FGAR) and glutamine to yield formylglycinamidine ribonucleotide (FGAM) and glutamate. The FGAM synthase complex is composed of three subunits. PurQ produces an ammonia molecule by converting glutamine to glutamate. PurL transfers the ammonia molecule to FGAR to form FGAM in an ATP-dependent manner. PurS interacts with PurQ and PurL and is thought to assist in the transfer of the ammonia molecule from PurQ to PurL. The chain is Phosphoribosylformylglycinamidine synthase subunit PurQ from Methanocaldococcus jannaschii (strain ATCC 43067 / DSM 2661 / JAL-1 / JCM 10045 / NBRC 100440) (Methanococcus jannaschii).